A 749-amino-acid chain; its full sequence is Transcription factor RFX3 (749 aa).

The segment at residues 183–258 (HLQWLLDNYE…YHYYGIRVKP (76 aa)) is a DNA-binding region (RFX-type winged-helix). Positions 663–699 (VSPGNLDKDEGSEVESETDEDLDDSSEPRAKREKTEL) are disordered. Residues 674–687 (SEVESETDEDLDDS) show a composition bias toward acidic residues. Positions 688-698 (SEPRAKREKTE) are enriched in basic and acidic residues.

The protein belongs to the RFX family. In terms of assembly, heterodimer; heterodimerizes with RFX1 and RFX2, and RFX6. In terms of tissue distribution, expressed in ciliated cells of the node and in the ciliated ependymal cells of the subcommissural organ (SCO), choroid plexuses (CP) and ventricular walls during embryonic and postnatal development. Expressed in developing and mature pancreatic endocrine cells during embryogenesis and in adults (at protein level).

The protein resides in the nucleus. Functionally, transcription factor required for ciliogenesis and islet cell differentiation during endocrine pancreas development. Essential for the differentiation of nodal monocilia and left-right asymmetry specification during embryogenesis. Required for the biogenesis of motile cilia by governing growth and beating efficiency of motile cells. Also required for ciliated ependymal cell differentiation. Together with RFX6, participates in the differentiation of 4 of the 5 islet cell types during endocrine pancreas development, with the exception of pancreatic PP (polypeptide-producing) cells. Regulates transcription by forming a heterodimer with another RFX protein and binding to the X-box in the promoter of target genes. Regulates the expression of genes involved in ciliary assembly (DYNC2LI1, FOXJ1 and BBS4) and genes involved in ciliary motility (DNAH11, DNAH9 and DNAH5). Represses transcription of MAP1A in non-neuronal cells but not in neuronal cells. This is Transcription factor RFX3 (Rfx3) from Mus musculus (Mouse).